The following is a 945-amino-acid chain: LPS-assembly protein LptD (945 aa).

The signal sequence occupies residues 1–33; the sequence is MALKSPAFRKKFPLLVTGSLLALQPLATSFVVA. The tract at residues 56-98 is disordered; that stretch reads AQLPPRPVHDANSVSSSVATAADATGEEASGDKSKLVTEAKGR. Over residues 65–79 the composition is skewed to low complexity; the sequence is DANSVSSSVATAADA. The span at 85 to 98 shows a compositional bias: basic and acidic residues; sequence SGDKSKLVTEAKGR.

This sequence belongs to the LptD family. Component of the lipopolysaccharide transport and assembly complex. Interacts with LptE and LptA.

It is found in the cell outer membrane. Its function is as follows. Together with LptE, is involved in the assembly of lipopolysaccharide (LPS) at the surface of the outer membrane. The chain is LPS-assembly protein LptD from Pseudomonas fluorescens (strain ATCC BAA-477 / NRRL B-23932 / Pf-5).